Here is a 728-residue protein sequence, read N- to C-terminus: Catalase-peroxidase (728 aa).

Residues 91–218 constitute a cross-link (tryptophyl-tyrosyl-methioninium (Trp-Tyr) (with M-244)); that stretch reads WHSAGTYRIA…LAAVQMGLIY (128 aa). Catalysis depends on His-92, which acts as the Proton acceptor. Positions 218-244 form a cross-link, tryptophyl-tyrosyl-methioninium (Tyr-Met) (with W-91); it reads YVNPEGPDGNPDPVAAARDIRETFARM. His-259 lines the heme b pocket.

Belongs to the peroxidase family. Peroxidase/catalase subfamily. In terms of assembly, homodimer or homotetramer. Heme b serves as cofactor. Post-translationally, formation of the three residue Trp-Tyr-Met cross-link is important for the catalase, but not the peroxidase activity of the enzyme.

It catalyses the reaction H2O2 + AH2 = A + 2 H2O. It carries out the reaction 2 H2O2 = O2 + 2 H2O. In terms of biological role, bifunctional enzyme with both catalase and broad-spectrum peroxidase activity. The polypeptide is Catalase-peroxidase (Burkholderia multivorans (strain ATCC 17616 / 249)).